Reading from the N-terminus, the 169-residue chain is uncharacterized protein (169 aa).

Residues asparagine 13, asparagine 29, asparagine 39, and asparagine 48 are each glycosylated (N-linked (GlcNAc...) asparagine; by host). The Cell attachment site signature appears at 109-111 (RGD). N-linked (GlcNAc...) asparagine; by host glycosylation occurs at asparagine 135. Residues 145–165 (IYHMAIVYILIMYQIYILSLI) traverse the membrane as a helical segment.

The protein resides in the membrane. This is an uncharacterized protein from Acanthamoeba polyphaga (Amoeba).